A 140-amino-acid chain; its full sequence is Thioredoxin M-type, chloroplastic (140 aa).

The N-terminal 34 residues, 1-34 (MALVARRAAVPSARSSARPAFARAAPRRSVVVRA), are a transit peptide targeting the chloroplast. The Thioredoxin domain maps to 35–140 (EAGAVNDDTF…IVQTVEKYLN (106 aa)). Catalysis depends on nucleophile residues cysteine 64 and cysteine 67. Cysteine 64 and cysteine 67 are disulfide-bonded.

It belongs to the thioredoxin family. Plant M-type subfamily. Forms a complex with heterodimeric ferredoxin-thioredoxin reductase (FTR) and ferredoxin.

It localises to the plastid. Its subcellular location is the chloroplast. Its function is as follows. Participates in various redox reactions through the reversible oxidation of the active center dithiol to a disulfide. The M form is known to activate NADP-malate dehydrogenase. This chain is Thioredoxin M-type, chloroplastic (TRXM), found in Chlamydomonas reinhardtii (Chlamydomonas smithii).